The chain runs to 168 residues: Secretory-abundant heat soluble protein 33020 (168 aa).

Positions 1–19 (MARFLVALALFGVVAMTAA) are cleaved as a signal peptide. The SAHS-c1 stretch occupies residues 26 to 57 (EWSGKPWLGKFVAEVSDKSENWEAFVDALGLP). The SAHS-c2 stretch occupies residues 72–100 (YKQGEHYHHILSLPDKNINKDIEFTLGQE). Residues 113–162 (KYFEDGNKLVADVSIPAKGKSIHDVYDVQGDQLIKSYKVGDVVAKKWFKK) are SAHS-c3.

The protein belongs to the Secretory-abundant heat soluble protein (SAHS) family.

Its subcellular location is the secreted. In terms of biological role, secreted heat soluble protein acting as a molecular shield in water-deficient condition. Tardigrade-specific intrinsically disordered proteins (TDPs) are essential for desiccation tolerance by forming non-crystalline amorphous solids upon desiccation, and this vitrified state mirrors their protective capabilities. In Hypsibius exemplaris (Freshwater tardigrade), this protein is Secretory-abundant heat soluble protein 33020.